Here is a 101-residue protein sequence, read N- to C-terminus: Large ribosomal subunit protein uL23 (101 aa).

This sequence belongs to the universal ribosomal protein uL23 family. Part of the 50S ribosomal subunit. Contacts protein L29, and trigger factor when it is bound to the ribosome.

Its function is as follows. One of the early assembly proteins it binds 23S rRNA. One of the proteins that surrounds the polypeptide exit tunnel on the outside of the ribosome. Forms the main docking site for trigger factor binding to the ribosome. The chain is Large ribosomal subunit protein uL23 from Nocardia farcinica (strain IFM 10152).